The chain runs to 181 residues: uncharacterized protein (181 aa).

Residues 35–175 (LRHRCVFVWA…ARLRAWRGAS (141 aa)) enclose the Nudix hydrolase domain. Residues 72 to 94 (GGVVGAGESYDDAALREAEEELG) carry the Nudix box motif. Residues Glu88 and Glu92 each contribute to the Mg(2+) site.

This sequence belongs to the Nudix hydrolase family. Mg(2+) is required as a cofactor.

This is an uncharacterized protein from Streptomyces coelicolor (strain ATCC BAA-471 / A3(2) / M145).